The following is a 183-amino-acid chain: Beta-defensin 129 (183 aa).

A signal peptide spans 1 to 19; it reads MKLLFPVFASLMLQYQVNT. 3 disulfide bridges follow: C27-C53, C34-C48, and C38-C54. The interval 141–183 is disordered; that stretch reads TATSTKSNTKESRDSATASPPPAPPPPNILPTPSLELEKAEEQ. Positions 159–170 are enriched in pro residues; that stretch reads SPPPAPPPPNIL.

The protein belongs to the beta-defensin family.

The protein resides in the secreted. Has antibacterial activity. The polypeptide is Beta-defensin 129 (DEFB129) (Pongo pygmaeus (Bornean orangutan)).